The following is a 73-amino-acid chain: Beta-defensin 50 (73 aa).

The signal sequence occupies residues 1–23 (MKTLCFLLLTSGLLYLMVKGVGS). 2 cysteine pairs are disulfide-bonded: Cys34/Cys63 and Cys46/Cys64.

The protein belongs to the beta-defensin family. In terms of tissue distribution, highly expressed in prostate. Not expressed in uterus, epididymis, ovary, testis, spleen, submaxillary gland, thymus, thyroid, pancreas, smooth muscle, skeletal muscle, heart, kidney, lung, liver, eye and brain.

The protein localises to the secreted. Has bactericidal activity. The chain is Beta-defensin 50 (Defb50) from Mus musculus (Mouse).